The primary structure comprises 125 residues: Cu-Zn superoxide dismutase-like protein OPG175 (125 aa).

Cysteine 52 and cysteine 102 are disulfide-bonded.

This sequence belongs to the Cu-Zn superoxide dismutase family.

The protein localises to the virion. It is found in the host cytoplasm. In terms of biological role, superoxide dismutase-like protein with no enzymatic activity. The chain is Cu-Zn superoxide dismutase-like protein OPG175 (OPG175) from Cowpox virus (strain Brighton Red) (CPV).